Reading from the N-terminus, the 318-residue chain is Protein IMPACT-A (318 aa).

Positions 14–116 (DEVEALTSIY…EKIREFLLGK (103 aa)) constitute an RWD domain. The disordered stretch occupies residues 296–318 (EESSKQTAKSKKVGKECKKKADH). Residues 308-318 (VGKECKKKADH) show a composition bias toward basic and acidic residues.

The protein belongs to the IMPACT family. In terms of assembly, interacts with GCN1; prevents the interaction of GCN1 with EIF2AK4/GCN2 and inhibits EIF2AK4/GCN2 kinase activity. Interaction with RPL39; this interaction occurs in a GCN1-independent manner. Associates with ribosomes; this interaction occurs in a GCN1-independent manner. Associates with actin; this interaction occurs in a GCN1-independent manner.

The protein resides in the cytoplasm. In terms of biological role, translational regulator that ensures constant high levels of translation upon a variety of stress conditions, such as amino acid starvation, UV-C irradiation, proteasome inhibitor treatment and glucose deprivation. Plays a role as a negative regulator of the EIF2AK4/GCN2 kinase activity; impairs GCN1-mediated EIF2AK4/GCN2 activation, and hence EIF2AK4/GCN2-mediated eIF-2-alpha phosphorylation and subsequent down-regulation of protein synthesis. Plays a role in differentiation of neuronal cells by stimulating neurite outgrowth. The sequence is that of Protein IMPACT-A (impact-A) from Xenopus tropicalis (Western clawed frog).